The sequence spans 587 residues: Glutamine--tRNA ligase (587 aa).

The 'HIGH' region signature appears at 58 to 68 (PEPNGYLHIGH). ATP is bound by residues 59 to 61 (EPN) and 65 to 71 (HIGHAKS). Asp-91 and Tyr-240 together coordinate L-glutamine. ATP is bound by residues Thr-259 and 294-295 (RL). Positions 301 to 305 (VTSKR) match the 'KMSKS' region motif.

This sequence belongs to the class-I aminoacyl-tRNA synthetase family. As to quaternary structure, monomer.

Its subcellular location is the cytoplasm. It catalyses the reaction tRNA(Gln) + L-glutamine + ATP = L-glutaminyl-tRNA(Gln) + AMP + diphosphate. The chain is Glutamine--tRNA ligase from Bordetella bronchiseptica (strain ATCC BAA-588 / NCTC 13252 / RB50) (Alcaligenes bronchisepticus).